Here is a 314-residue protein sequence, read N- to C-terminus: Acetyl-coenzyme A carboxylase carboxyl transferase subunit alpha (314 aa).

The region spanning 32 to 289 (EIDMLEASLA…KRTFESHLSE (258 aa)) is the CoA carboxyltransferase C-terminal domain.

This sequence belongs to the AccA family. Acetyl-CoA carboxylase is a heterohexamer composed of biotin carboxyl carrier protein (AccB), biotin carboxylase (AccC) and two subunits each of ACCase subunit alpha (AccA) and ACCase subunit beta (AccD).

It localises to the cytoplasm. The catalysed reaction is N(6)-carboxybiotinyl-L-lysyl-[protein] + acetyl-CoA = N(6)-biotinyl-L-lysyl-[protein] + malonyl-CoA. It participates in lipid metabolism; malonyl-CoA biosynthesis; malonyl-CoA from acetyl-CoA: step 1/1. Functionally, component of the acetyl coenzyme A carboxylase (ACC) complex. First, biotin carboxylase catalyzes the carboxylation of biotin on its carrier protein (BCCP) and then the CO(2) group is transferred by the carboxyltransferase to acetyl-CoA to form malonyl-CoA. The sequence is that of Acetyl-coenzyme A carboxylase carboxyl transferase subunit alpha from Staphylococcus saprophyticus subsp. saprophyticus (strain ATCC 15305 / DSM 20229 / NCIMB 8711 / NCTC 7292 / S-41).